Here is an 850-residue protein sequence, read N- to C-terminus: G-type lectin S-receptor-like serine/threonine-protein kinase CES101 (850 aa).

An N-terminal signal peptide occupies residues 1 to 22 (MWSNCIFLTLFTFYLFLGQSCC). Residues 23 to 423 (QTDTLLQGQY…IKGSKLAATW (401 aa)) lie on the Extracellular side of the membrane. The 121-residue stretch at 24–144 (TDTLLQGQYL…DSDGSMKRTL (121 aa)) folds into the Bulb-type lectin domain. Asn55, Asn118, Asn194, and Asn374 each carry an N-linked (GlcNAc...) asparagine glycan. One can recognise a PAN domain in the interval 334 to 416 (CSRFGYTFRE…PRTIYIRIKG (83 aa)). Cystine bridges form between Cys367/Cys390 and Cys371/Cys377. Residues 424–444 (LVVVASLFLIIPVTWLIIYLV) traverse the membrane as a helical segment. Topologically, residues 445 to 850 (LRKFKIKGTN…RVTITVMEAR (406 aa)) are cytoplasmic. Residues 527–816 (FSDANKLGEG…ALSLPKEPAF (290 aa)) enclose the Protein kinase domain. ATP contacts are provided by residues 533–541 (LGEGGFGPV) and Lys555. The residue at position 561 (Ser561) is a Phosphoserine. The interval 616–633 (LRKIVLDWKLRFRIMEGI) is caM-binding. The active-site Proton acceptor is the Asp652. Phosphoserine is present on Ser669. Thr686 is modified (phosphothreonine). Ser730 and Ser838 each carry phosphoserine. Thr845 is subject to Phosphothreonine.

Belongs to the protein kinase superfamily. Ser/Thr protein kinase family. Mostly expressed in leaves, and, to a lower extent, in roots and flowers.

It localises to the cell membrane. The catalysed reaction is L-seryl-[protein] + ATP = O-phospho-L-seryl-[protein] + ADP + H(+). It catalyses the reaction L-threonyl-[protein] + ATP = O-phospho-L-threonyl-[protein] + ADP + H(+). In terms of biological role, promotes the expression of genes involved in photosynthesis at least in dedifferentiated calli. The polypeptide is G-type lectin S-receptor-like serine/threonine-protein kinase CES101 (CES101) (Arabidopsis thaliana (Mouse-ear cress)).